Consider the following 489-residue polypeptide: Rhamnulokinase (489 aa).

13 to 17 lines the ATP pocket; it reads ASSGR. A disulfide bond links cysteine 68 and cysteine 222. Residues glycine 83 and 236 to 238 each bind substrate; that span reads HDT. Aspartate 237 acts as the Proton acceptor in catalysis. Threonine 259 is an ATP binding site. Asparagine 296 is a binding site for substrate. Glutamine 304 is a binding site for ATP. A disulfide bridge links cysteine 353 with cysteine 370. Glycine 402 is a binding site for ATP. Residues cysteine 413 and cysteine 417 are joined by a disulfide bond.

Belongs to the rhamnulokinase family. As to quaternary structure, monomer. Mg(2+) is required as a cofactor.

It catalyses the reaction L-rhamnulose + ATP = L-rhamnulose 1-phosphate + ADP + H(+). The protein operates within carbohydrate degradation; L-rhamnose degradation; glycerone phosphate from L-rhamnose: step 2/3. Involved in the catabolism of L-rhamnose (6-deoxy-L-mannose). Catalyzes the transfer of the gamma-phosphate group from ATP to the 1-hydroxyl group of L-rhamnulose to yield L-rhamnulose 1-phosphate. This Escherichia coli O7:K1 (strain IAI39 / ExPEC) protein is Rhamnulokinase.